The chain runs to 169 residues: Methane monooxygenase component A gamma chain (169 aa).

In terms of assembly, m.trichosporium has two forms of methane monooxygenase, a soluble and a membrane-bound type. The soluble type consists of four components (A to D): protein A, comprising three chains, in an alpha-2, beta-2, gamma-2 configuration, is a nonheme iron protein containing an unusual mu-hydroxo bridge structure at its active site and interacts with both oxygen and methane.

It catalyses the reaction methane + NADH + O2 + H(+) = methanol + NAD(+) + H2O. It carries out the reaction methane + NADPH + O2 + H(+) = methanol + NADP(+) + H2O. Responsible for the initial oxygenation of methane to methanol in methanotrophs. It also catalyzes the monohydroxylation of a variety of unactivated alkenes, alicyclic, aromatic and heterocyclic compounds. This chain is Methane monooxygenase component A gamma chain (mmoZ), found in Methylosinus trichosporium.